Consider the following 342-residue polypeptide: Phenylalanine--tRNA ligase alpha subunit (342 aa).

Glutamate 260 serves as a coordination point for Mg(2+).

The protein belongs to the class-II aminoacyl-tRNA synthetase family. Phe-tRNA synthetase alpha subunit type 1 subfamily. Tetramer of two alpha and two beta subunits. It depends on Mg(2+) as a cofactor.

It is found in the cytoplasm. The enzyme catalyses tRNA(Phe) + L-phenylalanine + ATP = L-phenylalanyl-tRNA(Phe) + AMP + diphosphate + H(+). In Nocardia farcinica (strain IFM 10152), this protein is Phenylalanine--tRNA ligase alpha subunit.